The primary structure comprises 1644 residues: Kinesin-like protein unc-104 (1644 aa).

Residues 3–351 form the Kinesin motor domain; the sequence is SVKVAVRVRP…LRYADRAKQI (349 aa). Residue 97–104 participates in ATP binding; it reads GQTGAGKS. Residues 358 to 436 are a coiled coil; sequence NEDANAKLIR…IAELNETWEE (79 aa). Residues 499–565 form the FHA domain; sequence TRLGTSEANV…LQTGSRVILG (67 aa). Residues 574-591 show a composition bias toward basic and acidic residues; the sequence is HPEQAREKREKPKDKDVG. Residues 574–598 form a disordered region; sequence HPEQAREKREKPKDKDVGENPGGNA. A coiled-coil region spans residues 631 to 672; that stretch reads EQFKREKLAADQEFEEQRKTYEARIDALQKQVEEQSMTMSMY. 2 disordered regions span residues 953–985 and 1419–1440; these read EQEDADSGRGDSSVASELHESNEHEPGEHLQPG and HMVIPPSPQTPVKDQQTPTLPE. Over residues 969-984 the composition is skewed to basic and acidic residues; sequence ELHESNEHEPGEHLQP. Positions 1428 to 1437 are enriched in polar residues; that stretch reads TPVKDQQTPT. The PH domain occupies 1542–1640; it reads VVARKGYLNV…WLYAINPLLA (99 aa).

The protein belongs to the TRAFAC class myosin-kinesin ATPase superfamily. Kinesin family. Unc-104 subfamily. As to quaternary structure, monomer.

It is found in the cytoplasm. The protein localises to the cytoskeleton. Functionally, required for presynaptic maturation, has a role in axonal transport of dense-core vesicles carrying synaptic vesicle precursors, components required for the morphological transformation of axonal growth cones to mature boutons. The protein is Kinesin-like protein unc-104 of Aedes aegypti (Yellowfever mosquito).